The following is a 239-amino-acid chain: 1-(5-phosphoribosyl)-5-[(5-phosphoribosylamino)methylideneamino] imidazole-4-carboxamide isomerase (239 aa).

The active-site Proton acceptor is the Asp-8. Asp-129 (proton donor) is an active-site residue.

The protein belongs to the HisA/HisF family.

It is found in the cytoplasm. It catalyses the reaction 1-(5-phospho-beta-D-ribosyl)-5-[(5-phospho-beta-D-ribosylamino)methylideneamino]imidazole-4-carboxamide = 5-[(5-phospho-1-deoxy-D-ribulos-1-ylimino)methylamino]-1-(5-phospho-beta-D-ribosyl)imidazole-4-carboxamide. It functions in the pathway amino-acid biosynthesis; L-histidine biosynthesis; L-histidine from 5-phospho-alpha-D-ribose 1-diphosphate: step 4/9. The protein is 1-(5-phosphoribosyl)-5-[(5-phosphoribosylamino)methylideneamino] imidazole-4-carboxamide isomerase of Roseobacter denitrificans (strain ATCC 33942 / OCh 114) (Erythrobacter sp. (strain OCh 114)).